Here is a 744-residue protein sequence, read N- to C-terminus: Tripartite motif-containing protein 2 (744 aa).

Serine 10 is modified (phosphoserine). The segment at 23–64 adopts an RING-type zinc-finger fold; sequence CSICLERYKNPKVLPCLHTFCERCLQNYIPAHSLTLSCPVCR. Residues 113 to 154 form a B box-type zinc finger; it reads GKPLSCPNHDGNVMEFYCQSCETAMCRECTEGEHAEHPTVPL. Residues cysteine 118, histidine 121, cysteine 141, and histidine 146 each contribute to the Zn(2+) site. The stretch at 320-421 is one Filamin repeat; that stretch reads TTNAVASETV…IRGSPFKLKV (102 aa). Threonine 371 carries the phosphothreonine modification. Phosphoserine occurs at positions 375, 424, and 428. Residues 432–462 form a disordered region; the sequence is EGVKRRVKSPGSGHVKQKAVKRPASMYSTGK. 6 NHL repeats span residues 473–516, 520–563, 564–605, 609–652, 656–699, and 700–743; these read IFRV…FSND, KSRF…FSND, GKFK…FQPN, VTRF…FNQE, MLKF…FDGS, and GSFL…YRYL.

It belongs to the TRIM/RBCC family. Forms homooligomers. Interacts with TRIM3; this interaction reduces TRIM2 activity. Interacts with myosin V; myosin V may not be a substrate for ubiquitination. Interacts with NEFL. Interacts with phosphorylated BCL2L11. Interacts with SIRPA. RING-type zinc finger-dependent and UBE2D1-dependent autoubiquitination.

The enzyme catalyses S-ubiquitinyl-[E2 ubiquitin-conjugating enzyme]-L-cysteine + [acceptor protein]-L-lysine = [E2 ubiquitin-conjugating enzyme]-L-cysteine + N(6)-ubiquitinyl-[acceptor protein]-L-lysine.. Its pathway is protein modification; protein ubiquitination. UBE2D1-dependent E3 ubiquitin-protein ligase that mediates the ubiquitination of NEFL and of phosphorylated BCL2L11. Plays a neuroprotective function. May play a role in neuronal rapid ischemic tolerance. Plays a role in antiviral immunity and limits New World arenavirus infection independently of its ubiquitin ligase activity. This is Tripartite motif-containing protein 2 (Trim2) from Rattus norvegicus (Rat).